The chain runs to 123 residues: Ribonuclease P protein component (123 aa).

Belongs to the RnpA family. In terms of assembly, consists of a catalytic RNA component (M1 or rnpB) and a protein subunit.

It carries out the reaction Endonucleolytic cleavage of RNA, removing 5'-extranucleotides from tRNA precursor.. Its function is as follows. RNaseP catalyzes the removal of the 5'-leader sequence from pre-tRNA to produce the mature 5'-terminus. It can also cleave other RNA substrates such as 4.5S RNA. The protein component plays an auxiliary but essential role in vivo by binding to the 5'-leader sequence and broadening the substrate specificity of the ribozyme. In Herpetosiphon aurantiacus (strain ATCC 23779 / DSM 785 / 114-95), this protein is Ribonuclease P protein component.